We begin with the raw amino-acid sequence, 490 residues long: Pup--protein ligase (490 aa).

Residue Glu9 participates in Mg(2+) binding. An ATP-binding site is contributed by Arg53. Tyr55 is a Mg(2+) binding site. The active-site Proton acceptor is the Asp57. Position 63 (Glu63) interacts with Mg(2+). Residue Ser66 coordinates ATP. The segment at Lys160 to Pro181 is disordered. Trp441 lines the ATP pocket.

The protein belongs to the Pup ligase/Pup deamidase family. Pup-conjugating enzyme subfamily.

The enzyme catalyses ATP + [prokaryotic ubiquitin-like protein]-L-glutamate + [protein]-L-lysine = ADP + phosphate + N(6)-([prokaryotic ubiquitin-like protein]-gamma-L-glutamyl)-[protein]-L-lysine.. Its pathway is protein degradation; proteasomal Pup-dependent pathway. The protein operates within protein modification; protein pupylation. Catalyzes the covalent attachment of the prokaryotic ubiquitin-like protein modifier Pup to the proteasomal substrate proteins, thereby targeting them for proteasomal degradation. This tagging system is termed pupylation. The ligation reaction involves the side-chain carboxylate of the C-terminal glutamate of Pup and the side-chain amino group of a substrate lysine. The protein is Pup--protein ligase of Rothia mucilaginosa (strain DY-18) (Stomatococcus mucilaginosus).